The following is a 463-amino-acid chain: MELKQDQIVNFLKNYGFVYQSSEIYNGLANSWDYGPLGALLKNNIKQLLLKHFVFSQPDMKLLDSSIILNPLVWQASGHLDNFSDPLVDCKKCKSRYRADKLIEELNDDSIKITENTDPSYLEQILVDKKVECKKCESTNWTKIRKFNLMFKTFQGVVEDSLNTIYLRPETAQGIFINFKNIVRTQRMKLPFGVAQIGKAFRNEITPGNFIFRTREFEQFEIEYFLEPELVKEKFDWYINQIEDFLINKLLINKQLIKRHEIAKDELAHYSSRTIDFQFNFPHGWSELWGLAHRGNFDLTAHSNESGKTLDYHNEIEKTKIIPDVIEPSLGIERILYAIFCAHYHVEQLADNDSREVLRLPVSLSPYQLAILPLVNKLKDQAYQLYLDLLKISDANLRFDFDSAGSIGKRYRRYDAIGAKYCLTYDFDSLEKGIVTIRERDSMEQIKIPISELRQWIRNNLHE.

Substrate contacts are provided by arginine 98 and glutamate 170. Residues 202–204 (RNE), 212–217 (FRTREF), 287–288 (EL), and 331–334 (GIER) each bind ATP. 217-221 (FEQFE) is a binding site for substrate. Residue 327–331 (EPSLG) coordinates substrate.

This sequence belongs to the class-II aminoacyl-tRNA synthetase family. As to quaternary structure, homodimer.

It is found in the cytoplasm. The catalysed reaction is tRNA(Gly) + glycine + ATP = glycyl-tRNA(Gly) + AMP + diphosphate. Catalyzes the attachment of glycine to tRNA(Gly). The sequence is that of Glycine--tRNA ligase from Mycoplasmoides gallisepticum (strain R(low / passage 15 / clone 2)) (Mycoplasma gallisepticum).